Consider the following 395-residue polypeptide: MAKENFNRSKPHLNIGTIGHVDHGKTTLTAAITKVLSDAGYCQAKSFDQIDNAPEEKERGITINTSHVEYETANRHYAHVDCPGHADYVKNMVTGAAQMDGAILVVAATDGPMPQTREHILLGRQVGIPRIVVFMNKVDMVDDAELLELVEMEIRDLLSFYEYDGDNGPVVQGSALGGLNNDPNWVPKIIELMEAVDNWIEEPVRDVAKPFLMPVEDVFTITGRGTVATGRIETGVANTGDPVEIIGMGAEKLTSTITGVEMFRKILDRGEAGDNVGLLLRGIDKADIKRGMVIIKPGSVKPHAKFKAEVYILKKEEGGRHTPFHNNYRPQFYVRTTDVTGVISLPAGVEMVMPGDNLTIEVALLSPIAMNVGLRFAIREGGRTVGAGQVTEIVE.

Positions 10 to 204 (KPHLNIGTIG…AVDNWIEEPV (195 aa)) constitute a tr-type G domain. Residues 19-26 (GHVDHGKT) are G1. 19–26 (GHVDHGKT) provides a ligand contact to GTP. Thr-26 provides a ligand contact to Mg(2+). Positions 60 to 64 (GITIN) are G2. The segment at 81–84 (DCPG) is G3. Residues 81–85 (DCPGH) and 136–139 (NKVD) contribute to the GTP site. A G4 region spans residues 136–139 (NKVD). The interval 174–176 (SAL) is G5.

This sequence belongs to the TRAFAC class translation factor GTPase superfamily. Classic translation factor GTPase family. EF-Tu/EF-1A subfamily. As to quaternary structure, monomer.

Its subcellular location is the cytoplasm. The catalysed reaction is GTP + H2O = GDP + phosphate + H(+). In terms of biological role, GTP hydrolase that promotes the GTP-dependent binding of aminoacyl-tRNA to the A-site of ribosomes during protein biosynthesis. This is Elongation factor Tu from Flavobacterium johnsoniae (strain ATCC 17061 / DSM 2064 / JCM 8514 / BCRC 14874 / CCUG 350202 / NBRC 14942 / NCIMB 11054 / UW101) (Cytophaga johnsonae).